Consider the following 391-residue polypeptide: Elongation factor Tu 1 (391 aa).

Positions Lys-10–Glu-201 constitute a tr-type G domain. Positions Gly-19–Thr-26 are G1. A GTP-binding site is contributed by Gly-19 to Thr-26. Residue Thr-26 participates in Mg(2+) binding. The interval Gly-55–Ser-59 is G2. A G3 region spans residues Asp-76–Gly-79. GTP is bound by residues Asp-76–His-80 and Asn-131–Asp-134. The interval Asn-131–Asp-134 is G4. A G5 region spans residues Ser-169–Leu-171.

Belongs to the TRAFAC class translation factor GTPase superfamily. Classic translation factor GTPase family. EF-Tu/EF-1A subfamily. Monomer.

Its subcellular location is the cytoplasm. The catalysed reaction is GTP + H2O = GDP + phosphate + H(+). GTP hydrolase that promotes the GTP-dependent binding of aminoacyl-tRNA to the A-site of ribosomes during protein biosynthesis. The chain is Elongation factor Tu 1 from Bartonella bacilliformis (strain ATCC 35685 / KC583 / Herrer 020/F12,63).